A 673-amino-acid chain; its full sequence is Thimet-like oligopeptidase (673 aa).

A Zn(2+)-binding site is contributed by histidine 465. Glutamate 466 is a catalytic residue. Zn(2+)-binding residues include histidine 469 and histidine 472.

The protein belongs to the peptidase M3 family. Zn(2+) is required as a cofactor.

The chain is Thimet-like oligopeptidase from Dictyostelium discoideum (Social amoeba).